Here is a 600-residue protein sequence, read N- to C-terminus: Proline--tRNA ligase (600 aa).

The protein belongs to the class-II aminoacyl-tRNA synthetase family. ProS type 1 subfamily. As to quaternary structure, homodimer.

It localises to the cytoplasm. It catalyses the reaction tRNA(Pro) + L-proline + ATP = L-prolyl-tRNA(Pro) + AMP + diphosphate. Functionally, catalyzes the attachment of proline to tRNA(Pro) in a two-step reaction: proline is first activated by ATP to form Pro-AMP and then transferred to the acceptor end of tRNA(Pro). As ProRS can inadvertently accommodate and process non-cognate amino acids such as alanine and cysteine, to avoid such errors it has two additional distinct editing activities against alanine. One activity is designated as 'pretransfer' editing and involves the tRNA(Pro)-independent hydrolysis of activated Ala-AMP. The other activity is designated 'posttransfer' editing and involves deacylation of mischarged Ala-tRNA(Pro). The misacylated Cys-tRNA(Pro) is not edited by ProRS. The polypeptide is Proline--tRNA ligase (Prochlorococcus marinus (strain AS9601)).